We begin with the raw amino-acid sequence, 426 residues long: Gamma-glutamyl phosphate reductase (426 aa).

The protein belongs to the gamma-glutamyl phosphate reductase family.

It localises to the cytoplasm. The enzyme catalyses L-glutamate 5-semialdehyde + phosphate + NADP(+) = L-glutamyl 5-phosphate + NADPH + H(+). It participates in amino-acid biosynthesis; L-proline biosynthesis; L-glutamate 5-semialdehyde from L-glutamate: step 2/2. In terms of biological role, catalyzes the NADPH-dependent reduction of L-glutamate 5-phosphate into L-glutamate 5-semialdehyde and phosphate. The product spontaneously undergoes cyclization to form 1-pyrroline-5-carboxylate. This is Gamma-glutamyl phosphate reductase from Sorangium cellulosum (strain So ce56) (Polyangium cellulosum (strain So ce56)).